The primary structure comprises 312 residues: tRNA dimethylallyltransferase (312 aa).

19–26 (GPSGSGKS) is an ATP binding site. Substrate is bound at residue 21–26 (SGSGKS). Positions 44–47 (DSLS) are interaction with substrate tRNA.

The protein belongs to the IPP transferase family. In terms of assembly, monomer. Requires Mg(2+) as cofactor.

It carries out the reaction adenosine(37) in tRNA + dimethylallyl diphosphate = N(6)-dimethylallyladenosine(37) in tRNA + diphosphate. In terms of biological role, catalyzes the transfer of a dimethylallyl group onto the adenine at position 37 in tRNAs that read codons beginning with uridine, leading to the formation of N6-(dimethylallyl)adenosine (i(6)A). In Helicobacter pylori (strain J99 / ATCC 700824) (Campylobacter pylori J99), this protein is tRNA dimethylallyltransferase.